The chain runs to 1399 residues: DNA-directed RNA polymerase subunit beta' (1399 aa).

Zn(2+) contacts are provided by Cys71, Cys73, Cys86, and Cys89. Residues Asp462, Asp464, and Asp466 each coordinate Mg(2+). 4 residues coordinate Zn(2+): Cys810, Cys884, Cys891, and Cys894. The interval Glu1376–Glu1399 is disordered.

It belongs to the RNA polymerase beta' chain family. The RNAP catalytic core consists of 2 alpha, 1 beta, 1 beta' and 1 omega subunit. When a sigma factor is associated with the core the holoenzyme is formed, which can initiate transcription. Requires Mg(2+) as cofactor. The cofactor is Zn(2+).

The enzyme catalyses RNA(n) + a ribonucleoside 5'-triphosphate = RNA(n+1) + diphosphate. In terms of biological role, DNA-dependent RNA polymerase catalyzes the transcription of DNA into RNA using the four ribonucleoside triphosphates as substrates. This chain is DNA-directed RNA polymerase subunit beta', found in Afipia carboxidovorans (strain ATCC 49405 / DSM 1227 / KCTC 32145 / OM5) (Oligotropha carboxidovorans).